We begin with the raw amino-acid sequence, 269 residues long: Thyroxine 5-deiodinase (269 aa).

Residues 1–14 (MLPAPHTCCRLLQQ) lie on the Cytoplasmic side of the membrane. Residues 15–35 (LLACCLLLPRFLLTVLLLWLL) traverse the membrane as a helical; Signal-anchor for type II membrane protein segment. At 36 to 269 (DFPCVRRRVI…TGNGALVIQV (234 aa)) the chain is on the extracellular side. Residue U133 is part of the active site. Position 133 (U133) is a non-standard amino acid, selenocysteine.

It belongs to the iodothyronine deiodinase family. In terms of assembly, monomer. Homodimer. May undergo minor heretodimerization with DIO1 and DIO2.

The protein localises to the cell membrane. It localises to the endosome membrane. The enzyme catalyses 3,3',5'-triiodo-L-thyronine + iodide + A + H(+) = L-thyroxine + AH2. The catalysed reaction is 3,3'-diiodo-L-thyronine + iodide + A + H(+) = 3,3',5-triiodo-L-thyronine + AH2. It carries out the reaction 3-iodo-L-thyronine + iodide + A + H(+) = 3,5-diiodo-L-thyronine + AH2. It catalyses the reaction L-thyronine + iodide + A + H(+) = 3-iodo-L-thyronine + AH2. The enzyme catalyses 3',5'-diiodo-L-thyronine + iodide + A + H(+) = 3,3',5'-triiodo-L-thyronine + AH2. The catalysed reaction is 3'-iodo-L-thyronine + iodide + A + H(+) = 3,3'-diiodo-L-thyronine + AH2. It carries out the reaction 3,3',5'-triiodothyronamine + iodide + A + H(+) = 3,3',5,5'-tetraiodothyronamine + AH2. It catalyses the reaction 3',5'-diiodothyronamine + iodide + A + H(+) = 3,3',5'-triiodothyronamine + AH2. The enzyme catalyses 3,3'-diiodothyronamine + iodide + A + H(+) = 3,3',5-triiodothyronamine + AH2. The catalysed reaction is 3-iodothyronamine + iodide + A + H(+) = 3,5-diiodothyronamine + AH2. It carries out the reaction 3'-iodothyronamine + iodide + A + H(+) = 3,3'-diiodothyronamine + AH2. It catalyses the reaction thyronamine + iodide + A + H(+) = 3-iodothyronamine + AH2. In terms of biological role, plays a crucial role in the metabolism of thyroid hormones (TH) and has specific roles in TH activation and inactivation by deiodination. Catalyzes the deiodination of L-thyroxine (T4) to 3,3',5'-triiodothyronine (rT3), 3,5-diiodothyronine (3,5-T2) to 3-monoiodothyronine (3-T1), rT3 to 3',5'-diiodothyronine (3',5'-T2) and 3,3'-diiodothyronine (3,3'-T2) to 3'-monoiodothyronine (3'-T1) via inner-ring deiodination (IRD). Catalyzes the deiodination of 3,5,3'-triiodothyronine (T3) to 3,3'-diiodothyronine (3,3'-T2) via IRD. Catalyzes the deiodination of 3-T1 to L-thyronine (T0) via outer-ring deiodination (ORD). Catalyzes the tyrosyl ring deiodinations of 3,3',5,5'-tetraiodothyronamine, 3,3',5'-triiodothyronamine, 3,5,3'-triiodothyronamine, 3,5-diiodothyronamine, 3,3'-diiodothyronamine and 3-iodothyronamine. The polypeptide is Thyroxine 5-deiodinase (dio3) (Aquarana catesbeiana (American bullfrog)).